A 260-amino-acid polypeptide reads, in one-letter code: Acyl-[acyl-carrier-protein]--UDP-N-acetylglucosamine O-acyltransferase (260 aa).

This sequence belongs to the transferase hexapeptide repeat family. LpxA subfamily. As to quaternary structure, homotrimer.

The protein localises to the cytoplasm. It carries out the reaction a (3R)-hydroxyacyl-[ACP] + UDP-N-acetyl-alpha-D-glucosamine = a UDP-3-O-[(3R)-3-hydroxyacyl]-N-acetyl-alpha-D-glucosamine + holo-[ACP]. The protein operates within glycolipid biosynthesis; lipid IV(A) biosynthesis; lipid IV(A) from (3R)-3-hydroxytetradecanoyl-[acyl-carrier-protein] and UDP-N-acetyl-alpha-D-glucosamine: step 1/6. Functionally, involved in the biosynthesis of lipid A, a phosphorylated glycolipid that anchors the lipopolysaccharide to the outer membrane of the cell. The chain is Acyl-[acyl-carrier-protein]--UDP-N-acetylglucosamine O-acyltransferase from Aliarcobacter butzleri (strain RM4018) (Arcobacter butzleri).